The following is a 244-amino-acid chain: Ribosomal RNA small subunit methyltransferase NEP1 (244 aa).

The disordered stretch occupies residues M1–G33. 2 positions are modified to phosphoserine: S5 and S16. S-adenosyl-L-methionine contacts are provided by residues T176, G201, G206, and I219–L224.

The protein belongs to the class IV-like SAM-binding methyltransferase superfamily. RNA methyltransferase NEP1 family. In terms of assembly, homodimer. Part of the small subunit (SSU) processome, composed of more than 70 proteins and the RNA chaperone small nucleolar RNA (snoRNA) U3.

The protein localises to the nucleus. It localises to the nucleolus. It carries out the reaction pseudouridine(1248) in human 18S rRNA + S-adenosyl-L-methionine = N(1)-methylpseudouridine(1248) in human 18S rRNA + S-adenosyl-L-homocysteine + H(+). S-adenosyl-L-methionine-dependent pseudouridine N(1)-methyltransferase that methylates pseudouridine at position in 18S rRNA. Involved the biosynthesis of the hypermodified N1-methyl-N3-(3-amino-3-carboxypropyl) pseudouridine (m1acp3-Psi) conserved in eukaryotic 18S rRNA. Is not able to methylate uridine at this position. Also has an essential role in 40S ribosomal subunit biogenesis independent on its methyltransferase activity, facilitating the incorporation of ribosomal protein S19 during the formation of pre-ribosomes. Part of the small subunit (SSU) processome, first precursor of the small eukaryotic ribosomal subunit. During the assembly of the SSU processome in the nucleolus, many ribosome biogenesis factors, an RNA chaperone and ribosomal proteins associate with the nascent pre-rRNA and work in concert to generate RNA folding, modifications, rearrangements and cleavage as well as targeted degradation of pre-ribosomal RNA by the RNA exosome. In Mus musculus (Mouse), this protein is Ribosomal RNA small subunit methyltransferase NEP1.